The sequence spans 98 residues: NADH-ubiquinone oxidoreductase chain 4L (98 aa).

Transmembrane regions (helical) follow at residues 2-22 (PSIF…TLVF), 29-49 (SLLC…LIIL), and 61-81 (ILLL…LVMV).

This sequence belongs to the complex I subunit 4L family. Core subunit of respiratory chain NADH dehydrogenase (Complex I) which is composed of 45 different subunits.

It is found in the mitochondrion inner membrane. The enzyme catalyses a ubiquinone + NADH + 5 H(+)(in) = a ubiquinol + NAD(+) + 4 H(+)(out). Functionally, core subunit of the mitochondrial membrane respiratory chain NADH dehydrogenase (Complex I) which catalyzes electron transfer from NADH through the respiratory chain, using ubiquinone as an electron acceptor. Part of the enzyme membrane arm which is embedded in the lipid bilayer and involved in proton translocation. This Propithecus tattersalli (Golden-crowned Sifaka) protein is NADH-ubiquinone oxidoreductase chain 4L (MT-ND4L).